Consider the following 269-residue polypeptide: Ubiquinone/menaquinone biosynthesis C-methyltransferase UbiE (269 aa).

S-adenosyl-L-methionine-binding positions include Thr-92, Asp-113, and 141–142; that span reads NA.

The protein belongs to the class I-like SAM-binding methyltransferase superfamily. MenG/UbiE family.

It catalyses the reaction a 2-demethylmenaquinol + S-adenosyl-L-methionine = a menaquinol + S-adenosyl-L-homocysteine + H(+). The enzyme catalyses a 2-methoxy-6-(all-trans-polyprenyl)benzene-1,4-diol + S-adenosyl-L-methionine = a 5-methoxy-2-methyl-3-(all-trans-polyprenyl)benzene-1,4-diol + S-adenosyl-L-homocysteine + H(+). The protein operates within quinol/quinone metabolism; menaquinone biosynthesis; menaquinol from 1,4-dihydroxy-2-naphthoate: step 2/2. It functions in the pathway cofactor biosynthesis; ubiquinone biosynthesis. Methyltransferase required for the conversion of demethylmenaquinol (DMKH2) to menaquinol (MKH2) and the conversion of 2-polyprenyl-6-methoxy-1,4-benzoquinol (DDMQH2) to 2-polyprenyl-3-methyl-6-methoxy-1,4-benzoquinol (DMQH2). The sequence is that of Ubiquinone/menaquinone biosynthesis C-methyltransferase UbiE from Brucella melitensis biotype 2 (strain ATCC 23457).